We begin with the raw amino-acid sequence, 219 residues long: FMN-dependent NADH:quinone oxidoreductase 2 (219 aa).

FMN contacts are provided by residues Ser10 and 23 to 25 (SIS).

Belongs to the azoreductase type 1 family. Homodimer. FMN serves as cofactor.

It catalyses the reaction 2 a quinone + NADH + H(+) = 2 a 1,4-benzosemiquinone + NAD(+). It carries out the reaction N,N-dimethyl-1,4-phenylenediamine + anthranilate + 2 NAD(+) = 2-(4-dimethylaminophenyl)diazenylbenzoate + 2 NADH + 2 H(+). Quinone reductase that provides resistance to thiol-specific stress caused by electrophilic quinones. In terms of biological role, also exhibits azoreductase activity. Catalyzes the reductive cleavage of the azo bond in aromatic azo compounds to the corresponding amines. This chain is FMN-dependent NADH:quinone oxidoreductase 2, found in Colwellia psychrerythraea (strain 34H / ATCC BAA-681) (Vibrio psychroerythus).